The following is a 153-amino-acid chain: FAD synthase (153 aa).

Residues threonine 9–phenylalanine 10, histidine 14–histidine 17, and aspartate 92 contribute to the ATP site.

The protein belongs to the archaeal FAD synthase family. As to quaternary structure, homodimer. A divalent metal cation is required as a cofactor.

It carries out the reaction FMN + ATP + H(+) = FAD + diphosphate. The protein operates within cofactor biosynthesis; FAD biosynthesis; FAD from FMN: step 1/1. Functionally, catalyzes the transfer of the AMP portion of ATP to flavin mononucleotide (FMN) to produce flavin adenine dinucleotide (FAD) coenzyme. The protein is FAD synthase of Halorubrum lacusprofundi (strain ATCC 49239 / DSM 5036 / JCM 8891 / ACAM 34).